Reading from the N-terminus, the 891-residue chain is MEQPVIKEGTLALIDTFAYLFRSYYMSAKNKPLTNDKGFPTGLLTGLVGMVKKFYKDRKNMPFIVFALESQTKTKRAEKLGEYKQNRKDAPKEMLLQIPIALEWLQKMGFVCVEVNGFEADDVIASLATLSPYKTRIYSKDKDFNQLLSDKIALFDGKTEFLAKDCVEKYGILPSQFTDYQGIVGDSSDNYKGVKGIGSKNAKELLQRLGSLEKIYENLDLAKNLLSPKMYRALIHDKASAFLSKELATLERGCIKEFDFLSCAFPSENPLLKIKDELKEYGFISTLRDLENSPTPLILDNAPLLDNTPALDNTPKKSCMIVLESAAPLSAFLEKLEKTNARVFARLVLDKEKKVLALAFLYEDQGYFLPLEEALFSPFSLEFLQNAFFKMLQHAQIIGHDLKPLLSFLKAKYQVPLENIRIQDTQILAFLKNPEKVGFDEVLKEYLKEELIPHEKIKDFKTKAEKLELLSVELNALKRLCEYFEKGGLEENLLSLAREIETPFMKVLMGMEFQGFKIDAPYFKRLEQEFKNELHVLERQILELIGVDFNLNSPKQLSEVLYDKLGLPKNKSHSTDEKSLLKILDKHPSIALILEYRELNKLFNTYTTPLLRLKDKDDKIHTTFIQTGTATGRLSSHSPNLQNIPVRSPKGLLIRKGFIASSKEYCLLGVDYSQIELRLLAHFSQDKDLMEAFLKGRDIHLETSKALFGEYLAKEKRSIAKSINFGLVYGMGSKKLSETLNISLNEAKSYIEAYFKRFPSIKDYLNRMKEEILKTSKAFTLLGRYRVFDFTGANDYVKGNYLREGVNAIFQGSASDLLKLGMLKVSERFKNNPSVRLLLQVHDELIFEIEEKNAPELQQEIQRILNDEVYPLRVPLETSAFIAKRWNELKG.

Positions 1 to 313 (MEQPVIKEGT…LLDNTPALDN (313 aa)) constitute a 5'-3' exonuclease domain. Residues 314 to 488 (TPKKSCMIVL…RLCEYFEKGG (175 aa)) form the 3'-5' exonuclease domain. A polymerase region spans residues 492 to 890 (NLLSLAREIE…FIAKRWNELK (399 aa)).

It belongs to the DNA polymerase type-A family. As to quaternary structure, single-chain monomer with multiple functions.

The enzyme catalyses DNA(n) + a 2'-deoxyribonucleoside 5'-triphosphate = DNA(n+1) + diphosphate. Its function is as follows. In addition to polymerase activity, this DNA polymerase exhibits 3'-5' and 5'-3' exonuclease activity. This is DNA polymerase I (polA) from Helicobacter pylori (strain ATCC 700392 / 26695) (Campylobacter pylori).